The following is a 1755-amino-acid chain: Transposon Ty1-ML2 Gag-Pol polyprotein (1755 aa).

Low complexity predominate over residues M1 to S16. 3 disordered regions span residues M1–Q93, P126–P173, and G352–T421. Composition is skewed to polar residues over residues T48–S60 and Q127–F152. Low complexity predominate over residues T153 to T165. The RNA-binding stretch occupies residues N299–H401. Residues N402–S418 are compositionally biased toward low complexity. S416 carries the phosphoserine modification. The active-site For protease activity; shared with dimeric partner is D461. The interval N583–C640 is integrase-type zinc finger-like. Positions N660 to P835 constitute an Integrase catalytic domain. 2 residues coordinate Mg(2+): D671 and D736. 3 disordered regions span residues S956–K1087, R1092–P1111, and D1130–A1171. The span at S960 to T969 shows a compositional bias: low complexity. Residues S1005–T1015 are compositionally biased toward polar residues. Residues E1038–S1053 show a composition bias toward basic and acidic residues. Composition is skewed to polar residues over residues Y1054 to D1082 and P1101 to P1111. Positions K1178 to R1212 match the Bipartite nuclear localization signal motif. Residues N1338–Q1476 enclose the Reverse transcriptase Ty1/copia-type domain. D1346, D1427, D1428, D1610, E1652, and D1685 together coordinate Mg(2+). Residues D1610–K1752 form the RNase H Ty1/copia-type domain.

In terms of assembly, the capsid protein forms a homotrimer, from which the VLPs are assembled. The protease is a homodimer, whose active site consists of two apposed aspartic acid residues. Post-translationally, initially, virus-like particles (VLPs) are composed of the structural unprocessed proteins Gag and Gag-Pol, and also contain the host initiator methionine tRNA (tRNA(i)-Met) which serves as a primer for minus-strand DNA synthesis, and a dimer of genomic Ty RNA. Processing of the polyproteins occurs within the particle and proceeds by an ordered pathway, called maturation. First, the protease (PR) is released by autocatalytic cleavage of the Gag-Pol polyprotein yielding capsid protein p45 and a Pol-p154 precursor protein. This cleavage is a prerequisite for subsequent processing of Pol-p154 at the remaining sites to release the mature structural and catalytic proteins. Maturation takes place prior to the RT reaction and is required to produce transposition-competent VLPs.

Its subcellular location is the cytoplasm. The protein localises to the nucleus. The enzyme catalyses DNA(n) + a 2'-deoxyribonucleoside 5'-triphosphate = DNA(n+1) + diphosphate. It carries out the reaction Endonucleolytic cleavage to 5'-phosphomonoester.. Functionally, capsid protein (CA) is the structural component of the virus-like particle (VLP), forming the shell that encapsulates the retrotransposons dimeric RNA genome. The particles are assembled from trimer-clustered units and there are holes in the capsid shells that allow for the diffusion of macromolecules. CA also has nucleocapsid-like chaperone activity, promoting primer tRNA(i)-Met annealing to the multipartite primer-binding site (PBS), dimerization of Ty1 RNA and initiation of reverse transcription. The aspartyl protease (PR) mediates the proteolytic cleavages of the Gag and Gag-Pol polyproteins after assembly of the VLP. In terms of biological role, reverse transcriptase/ribonuclease H (RT) is a multifunctional enzyme that catalyzes the conversion of the retro-elements RNA genome into dsDNA within the VLP. The enzyme displays a DNA polymerase activity that can copy either DNA or RNA templates, and a ribonuclease H (RNase H) activity that cleaves the RNA strand of RNA-DNA heteroduplexes during plus-strand synthesis and hydrolyzes RNA primers. The conversion leads to a linear dsDNA copy of the retrotransposon that includes long terminal repeats (LTRs) at both ends. Its function is as follows. Integrase (IN) targets the VLP to the nucleus, where a subparticle preintegration complex (PIC) containing at least integrase and the newly synthesized dsDNA copy of the retrotransposon must transit the nuclear membrane. Once in the nucleus, integrase performs the integration of the dsDNA into the host genome. The protein is Transposon Ty1-ML2 Gag-Pol polyprotein (TY1B-ML2) of Saccharomyces cerevisiae (strain ATCC 204508 / S288c) (Baker's yeast).